Consider the following 116-residue polypeptide: Tyrosine-protein phosphatase 10 (116 aa).

The 116-residue stretch at 1-116 (WRMVWEQNVS…SPTGYGPIVV (116 aa)) folds into the Tyrosine-protein phosphatase domain. Asp86 provides a ligand contact to substrate.

Belongs to the protein-tyrosine phosphatase family.

It catalyses the reaction O-phospho-L-tyrosyl-[protein] + H2O = L-tyrosyl-[protein] + phosphate. The sequence is that of Tyrosine-protein phosphatase 10 (STY-10) from Styela plicata (Wrinkled sea squirt).